A 181-amino-acid chain; its full sequence is Inner membrane-spanning protein YciB (181 aa).

A run of 5 helical transmembrane segments spans residues 10-30 (LIIFFAVYKFFDIYIASGALI), 50-70 (MHLITFAMVTVFGTLTLVFHD), 72-92 (AFIKWKVTIIYALFALALGVS), 118-138 (VTWYWVSFFAICGLVNIYVAF), and 148-168 (FKVFGLTALTLINTVITVFYL).

This sequence belongs to the YciB family.

The protein resides in the cell inner membrane. Its function is as follows. Plays a role in cell envelope biogenesis, maintenance of cell envelope integrity and membrane homeostasis. The chain is Inner membrane-spanning protein YciB from Shewanella sp. (strain MR-7).